A 507-amino-acid chain; its full sequence is Sensor protein CseC (507 aa).

The interval 1–42 is disordered; the sequence is MRGFFRQRRSVSPPGHPYDRTGPGEHAGPGARTGPGGRPRVL. Gly residues predominate over residues 25-37; it reads EHAGPGARTGPGG. 2 consecutive transmembrane segments (helical) span residues 60 to 80 and 183 to 203; these read LSAA…LVVH and ALVI…VLIG. The 57-residue stretch at 204 to 260 folds into the HAMP domain; it reads GQLSRRLREAAAAANRVASGEPDVRVRDAIGGVVRDETDDVARAVDAMADALQQRIE. The region spanning 268–470 is the Histidine kinase domain; that stretch reads DIAHELRTPV…VAVLWLPEHA (203 aa). Residue H271 is modified to Phosphohistidine; by autocatalysis. The disordered stretch occupies residues 472-507; that stretch reads TNTGSYPMLPDRSKSGASSSARDMSREASQGMSRKP. A compositionally biased stretch (polar residues) spans 486–507; it reads SGASSSARDMSREASQGMSRKP.

Its subcellular location is the cell membrane. The enzyme catalyses ATP + protein L-histidine = ADP + protein N-phospho-L-histidine.. Its function is as follows. Member of the two-component regulatory system CseB/CseC involved in the stability of the cell envelope, through activation of transcription of RNA polymerase sigma-E factor. CseC functions as a membrane-associated protein kinase that phosphorylates CseB in response to changes in the cell envelope. The polypeptide is Sensor protein CseC (cseC) (Streptomyces coelicolor (strain ATCC BAA-471 / A3(2) / M145)).